We begin with the raw amino-acid sequence, 527 residues long: Putative pumilio homolog 13 (527 aa).

The tract at residues 22 to 51 is disordered; that stretch reads ENMTTAASSSQSQPPQMQSSKFHQPENHIH. A compositionally biased stretch (low complexity) spans 24–41; that stretch reads MTTAASSSQSQPPQMQSS. The region spanning 184-527 is the PUM-HD domain; it reads GVNNSWRSNE…GNKILEKLNI (344 aa). Pumilio repeat units lie at residues 205-243, 244-279, 283-321, 322-357, 358-396, 397-432, 433-468, and 469-503; these read SMEN…MIFD, GLIV…LIVD, RHIS…RIMD, AISS…RLLE, VVSQ…RLIS, EVIE…LLVN, KLLR…IVVD, and LLRG…MLRY.

Its subcellular location is the cytoplasm. In terms of biological role, sequence-specific RNA-binding protein that regulates translation and mRNA stability by binding the 3'-UTR of target mRNAs. The polypeptide is Putative pumilio homolog 13 (APUM13) (Arabidopsis thaliana (Mouse-ear cress)).